Reading from the N-terminus, the 469-residue chain is Reticulon-2 (469 aa).

Disordered regions lie at residues M1–E180 and L201–G238. The span at A14–T25 shows a compositional bias: low complexity. Over residues S32–F43 the composition is skewed to basic and acidic residues. S44 carries the post-translational modification Phosphoserine. A compositionally biased stretch (basic and acidic residues) spans R135–L144. 2 stretches are compositionally biased toward polar residues: residues D159 to L168 and P203 to N226. The 200-residue stretch at V270–E469 folds into the Reticulon domain. 2 helical membrane passes run L293–L313 and L388–L408.

In terms of assembly, interacts with SPAST. Interacts with BACE1. Interacts (via first transmembrane domain) with ARL6IP5/GTRAP3-18. Interacts (via N-terminus) with SLC1A1/EAAC1; the interaction promotes cell surface expression of SLC1A1. In terms of tissue distribution, expressed in brain and spinal cord (at protein level). In the embryonic brain cortex, expressed in neurons but not in astrocytes (at protein level).

The protein resides in the endoplasmic reticulum membrane. The protein localises to the sarcoplasmic reticulum membrane. Its subcellular location is the cell membrane. It localises to the sarcolemma. It is found in the T-tubule. The protein resides in the cytoplasm. The protein localises to the myofibril. Its subcellular location is the sarcomere. It localises to the z line. It is found in the cytoskeleton. Inhibits amyloid precursor protein processing, probably by blocking BACE1 activity. Enhances trafficking of the glutamate transporter SLC1A1/EAAC1 from the endoplasmic reticulum to the cell surface. Plays a role in the translocation of SLC2A4/GLUT4 from intracellular membranes to the cell membrane which facilitates the uptake of glucose into the cell. The polypeptide is Reticulon-2 (Rattus norvegicus (Rat)).